The primary structure comprises 559 residues: Regulatory protein PHO2 (559 aa).

Disordered stretches follow at residues 16–88, 132–158, 293–333, and 534–559; these read ATDL…KGEA, LRKK…DYDR, INSN…AKDN, and PTDS…HRWI. Composition is skewed to low complexity over residues 24–52 and 63–74; these read HDQQ…IQTQ and NDMSASSNASDS. Positions 77 to 136 form a DNA-binding region, homeobox; the sequence is QRPKRTRAKGEALDVLKRKFEINPTPSLVERKKISDLIGMPEKNVRIWFQNRRAKLRKKQ. Over residues 141–151 the composition is skewed to polar residues; sequence KDTIPSSQSRD. Low complexity predominate over residues 293–307; that stretch reads INSNNTSDKNNSNTN. Residues 308–323 are compositionally biased toward acidic residues; sequence NDDDNDDNSNEDNDNS. Positions 324 to 333 are enriched in basic and acidic residues; the sequence is SEDKRNAKDN. Phosphothreonine is present on Thr-542.

Its subcellular location is the nucleus. In terms of biological role, regulator in phosphate metabolism and acts as a derepressor of another central regulator PHO5. Binds to the upstream activator sequence (UAS) of PHO5. It also binds to the TRP4, HIS4, and CYC1 promoters. The polypeptide is Regulatory protein PHO2 (PHO2) (Saccharomyces cerevisiae (strain ATCC 204508 / S288c) (Baker's yeast)).